A 325-amino-acid chain; its full sequence is Beta-ketoacyl-[acyl-carrier-protein] synthase III (325 aa).

Residues Cys119 and His252 contribute to the active site. The interval 253–257 (QANIR) is ACP-binding. The active site involves Asn282.

This sequence belongs to the thiolase-like superfamily. FabH family. Homodimer.

It is found in the cytoplasm. The catalysed reaction is malonyl-[ACP] + acetyl-CoA + H(+) = 3-oxobutanoyl-[ACP] + CO2 + CoA. The protein operates within lipid metabolism; fatty acid biosynthesis. Its function is as follows. Catalyzes the condensation reaction of fatty acid synthesis by the addition to an acyl acceptor of two carbons from malonyl-ACP. Catalyzes the first condensation reaction which initiates fatty acid synthesis and may therefore play a role in governing the total rate of fatty acid production. Possesses both acetoacetyl-ACP synthase and acetyl transacylase activities. Its substrate specificity determines the biosynthesis of branched-chain and/or straight-chain of fatty acids. In Acidovorax ebreus (strain TPSY) (Diaphorobacter sp. (strain TPSY)), this protein is Beta-ketoacyl-[acyl-carrier-protein] synthase III.